Here is a 159-residue protein sequence, read N- to C-terminus: Ribonuclease H (159 aa).

The RNase H type-1 domain maps to 8–150 (NLKEITMYTD…CDQLAVAAAK (143 aa)). Residues D17, E55, D77, and D142 each coordinate Mg(2+).

Belongs to the RNase H family. In terms of assembly, monomer. Mg(2+) is required as a cofactor.

The protein resides in the cytoplasm. It carries out the reaction Endonucleolytic cleavage to 5'-phosphomonoester.. In terms of biological role, endonuclease that specifically degrades the RNA of RNA-DNA hybrids. The protein is Ribonuclease H of Desulforamulus reducens (strain ATCC BAA-1160 / DSM 100696 / MI-1) (Desulfotomaculum reducens).